Reading from the N-terminus, the 376-residue chain is Actin-related protein T1 (376 aa).

It belongs to the actin family.

It localises to the cytoplasm. Its subcellular location is the cytoskeleton. It is found in the nucleus. The protein localises to the cytoplasmic vesicle. The protein resides in the secretory vesicle. It localises to the acrosome. Negatively regulates the Hedgehog (SHH) signaling. Binds to the promoter of the SHH signaling mediator, GLI1, and inhibits its expression. This is Actin-related protein T1 (Actrt1) from Mus musculus (Mouse).